Here is a 1673-residue protein sequence, read N- to C-terminus: Protein TIC 214 (1673 aa).

A run of 6 helical transmembrane segments spans residues 18–38 (IINSVVVVGLYYGFLTTFSIG), 67–87 (FITGQLIMFISIYYAPLHLAL), 90–110 (PHTITVLALPYLLFHFFCNTH), 127–147 (LSIQCVFLNNLIFQLFNHFIL), 175–195 (VGWIIGHIILMKSIGLLVVWI), and 218–238 (SMSIAGILNILLFVTCVYYLG).

It belongs to the TIC214 family. In terms of assembly, part of the Tic complex.

The protein resides in the plastid. It localises to the chloroplast inner membrane. In terms of biological role, involved in protein precursor import into chloroplasts. May be part of an intermediate translocation complex acting as a protein-conducting channel at the inner envelope. This chain is Protein TIC 214, found in Lactuca sativa (Garden lettuce).